We begin with the raw amino-acid sequence, 457 residues long: Chromosomal replication initiator protein DnaA (457 aa).

Positions 1–71 (MSPSIWEKCL…LLKNFCNINT (71 aa)) are domain I, interacts with DnaA modulators. The domain II stretch occupies residues 71-119 (TTPTLMLKICKPKIIQKKFFNELTLKKNILNSKLTYNVNTKLSNIIYSS). The interval 120–337 (EINTNYTFQN…GALNKILANS (218 aa)) is domain III, AAA+ region. ATP is bound by residues G165, G167, K168, and T169. The tract at residues 338 to 457 (DSKKKIITIN…FLTLLKILSS (120 aa)) is domain IV, binds dsDNA.

It belongs to the DnaA family. As to quaternary structure, oligomerizes as a right-handed, spiral filament on DNA at oriC.

The protein localises to the cytoplasm. Functionally, plays an essential role in the initiation and regulation of chromosomal replication. ATP-DnaA binds to the origin of replication (oriC) to initiate formation of the DNA replication initiation complex once per cell cycle. Binds the DnaA box (a 9 base pair repeat at the origin) and separates the double-stranded (ds)DNA. Forms a right-handed helical filament on oriC DNA; dsDNA binds to the exterior of the filament while single-stranded (ss)DNA is stabiized in the filament's interior. The ATP-DnaA-oriC complex binds and stabilizes one strand of the AT-rich DNA unwinding element (DUE), permitting loading of DNA polymerase. After initiation quickly degrades to an ADP-DnaA complex that is not apt for DNA replication. Binds acidic phospholipids. The sequence is that of Chromosomal replication initiator protein DnaA from Buchnera aphidicola subsp. Baizongia pistaciae (strain Bp).